The chain runs to 558 residues: Formate--tetrahydrofolate ligase (558 aa).

ATP is bound at residue 66–73 (TPAGEGKT).

It belongs to the formate--tetrahydrofolate ligase family.

The enzyme catalyses (6S)-5,6,7,8-tetrahydrofolate + formate + ATP = (6R)-10-formyltetrahydrofolate + ADP + phosphate. The protein operates within one-carbon metabolism; tetrahydrofolate interconversion. The protein is Formate--tetrahydrofolate ligase of Neisseria meningitidis serogroup C / serotype 2a (strain ATCC 700532 / DSM 15464 / FAM18).